Here is a 60-residue protein sequence, read N- to C-terminus: Phycobilisome degradation protein NblA homolog 2 (60 aa).

To Synechococcus PCC 7942 NblA and some, to chloroplast ycf18.

The chain is Phycobilisome degradation protein NblA homolog 2 from Synechocystis sp. (strain ATCC 27184 / PCC 6803 / Kazusa).